A 454-amino-acid polypeptide reads, in one-letter code: Phosphoglucosamine mutase (454 aa).

Residue serine 102 is the Phosphoserine intermediate of the active site. Mg(2+)-binding residues include serine 102, aspartate 247, aspartate 249, and aspartate 251. Residue serine 102 is modified to Phosphoserine.

It belongs to the phosphohexose mutase family. It depends on Mg(2+) as a cofactor. Activated by phosphorylation.

The enzyme catalyses alpha-D-glucosamine 1-phosphate = D-glucosamine 6-phosphate. Its function is as follows. Catalyzes the conversion of glucosamine-6-phosphate to glucosamine-1-phosphate. In Kineococcus radiotolerans (strain ATCC BAA-149 / DSM 14245 / SRS30216), this protein is Phosphoglucosamine mutase.